Here is a 247-residue protein sequence, read N- to C-terminus: Segregation and condensation protein A (247 aa).

It belongs to the ScpA family. As to quaternary structure, component of a cohesin-like complex composed of ScpA, ScpB and the Smc homodimer, in which ScpA and ScpB bind to the head domain of Smc. The presence of the three proteins is required for the association of the complex with DNA.

It localises to the cytoplasm. Functionally, participates in chromosomal partition during cell division. May act via the formation of a condensin-like complex containing Smc and ScpB that pull DNA away from mid-cell into both cell halves. The sequence is that of Segregation and condensation protein A from Bacillus anthracis (strain A0248).